Consider the following 346-residue polypeptide: MARHPRWTLSQVTELFEKPLLELLFEAQQIHRQHFDPKQIQVSTLLSIKTGACPEDCKYCPQSSRYKTGLEAERLMEVEQVLESARKAKNAGSTRFCMGAAWKNPRERDMPYLEQIVQGVKAMGLETCMTLGMLNESQAQRLANAGLDYYNHNLDTSPEFYGNIITTRTYQERLDTLEKVREAGIKVCSGGIVGLGETVNDRAGLLLQLANLPTPPESVPINMLVKVKGTPLADNDDVDAFDFIRTIAVARIMMPTSYVRLSAGREQMNEQTQAMCFMAGANSIFYGCKLLTTPNPAEDKDLQLFRKLGLNPQQTRVLAGDNEQQQRLEQTLMTPDTDDYYNAAAL.

The Radical SAM core domain occupies 38–256; the sequence is KQIQVSTLLS…IAVARIMMPT (219 aa). Positions 53, 57, and 60 each coordinate [4Fe-4S] cluster. [2Fe-2S] cluster-binding residues include Cys97, Cys128, Cys188, and Arg260.

The protein belongs to the radical SAM superfamily. Biotin synthase family. In terms of assembly, homodimer. [4Fe-4S] cluster is required as a cofactor. It depends on [2Fe-2S] cluster as a cofactor.

The enzyme catalyses (4R,5S)-dethiobiotin + (sulfur carrier)-SH + 2 reduced [2Fe-2S]-[ferredoxin] + 2 S-adenosyl-L-methionine = (sulfur carrier)-H + biotin + 2 5'-deoxyadenosine + 2 L-methionine + 2 oxidized [2Fe-2S]-[ferredoxin]. Its pathway is cofactor biosynthesis; biotin biosynthesis; biotin from 7,8-diaminononanoate: step 2/2. In terms of biological role, catalyzes the conversion of dethiobiotin (DTB) to biotin by the insertion of a sulfur atom into dethiobiotin via a radical-based mechanism. This chain is Biotin synthase, found in Salmonella arizonae (strain ATCC BAA-731 / CDC346-86 / RSK2980).